Reading from the N-terminus, the 153-residue chain is MADWFASPLKTCTHVCDFPTLAGDPSQEITCCDSMKNKLNDSRKVLLVSCSVSFNGSFYGGNRNVRGQLQISMLEDDGVCRPIGYVPIGGYLYHNDYGYYEGEKTFNLDIESQYLKKDEDYNRKFIVSVLNENGLDSLCDLKVFIVHALRIKV.

The protein belongs to the nanoviridae nuclear shuttle protein family.

The protein localises to the host nucleus. Its subcellular location is the host cytoplasm. Its function is as follows. Putative nuclear shuttle protein. The protein is Putative nuclear shuttle protein (DNA-N) of Astragalus sinicus (Chinese milk vetch).